We begin with the raw amino-acid sequence, 203 residues long: Large ribosomal subunit protein bL25 (203 aa).

The protein belongs to the bacterial ribosomal protein bL25 family. CTC subfamily. In terms of assembly, part of the 50S ribosomal subunit; part of the 5S rRNA/L5/L18/L25 subcomplex. Contacts the 5S rRNA. Binds to the 5S rRNA independently of L5 and L18.

This is one of the proteins that binds to the 5S RNA in the ribosome where it forms part of the central protuberance. The polypeptide is Large ribosomal subunit protein bL25 (Cellvibrio japonicus (strain Ueda107) (Pseudomonas fluorescens subsp. cellulosa)).